Here is a 241-residue protein sequence, read N- to C-terminus: NADPH-dependent FMN reductase ArsH (241 aa).

43 to 50 (SLRTVSYS) lines the FMN pocket.

This sequence belongs to the ArsH family. Homotetramer. Requires FMN as cofactor.

Its function is as follows. Has NADPH-dependent FMN reductase activity. No activity with NADH. May play a role in resistance to heavy metal toxicity. This chain is NADPH-dependent FMN reductase ArsH, found in Rhizobium meliloti (strain 1021) (Ensifer meliloti).